Here is a 160-residue protein sequence, read N- to C-terminus: uncharacterized protein (160 aa).

The Cupin type-2 domain occupies 37 to 110 (LMSLKPKEDI…TDYLKLYTIY (74 aa)).

The protein localises to the virion. This is an uncharacterized protein from Acanthamoeba polyphaga mimivirus (APMV).